A 220-amino-acid chain; its full sequence is Germin-like protein subfamily T member 2 (220 aa).

A signal peptide spans 1–27 (MTTLQISSSLFRSFLLVICVFVIPSLS). A disulfide bond links Cys-37 and Cys-52. The region spanning 64-212 (SGLGGPLNTS…TFRTDDVTVN (149 aa)) is the Cupin type-1 domain. Asn-71 carries an N-linked (GlcNAc...) asparagine glycan. The Mn(2+) site is built by His-112, His-114, and Glu-119. An N-linked (GlcNAc...) asparagine glycan is attached at Asn-136. Mn(2+) is bound at residue His-158.

It belongs to the germin family. Oligomer (believed to be a pentamer but probably hexamer).

It localises to the secreted. Its subcellular location is the extracellular space. The protein localises to the apoplast. Functionally, may play a role in plant defense. Probably has no oxalate oxidase activity even if the active site is conserved. The sequence is that of Germin-like protein subfamily T member 2 from Arabidopsis thaliana (Mouse-ear cress).